The following is a 379-amino-acid chain: 1-deoxy-D-xylulose 5-phosphate reductoisomerase (379 aa).

7 residues coordinate NADPH: threonine 10, glycine 11, serine 12, isoleucine 13, arginine 38, asparagine 39, and asparagine 121. Residue lysine 122 participates in 1-deoxy-D-xylulose 5-phosphate binding. Residue glutamate 123 participates in NADPH binding. Residue aspartate 147 participates in Mn(2+) binding. 1-deoxy-D-xylulose 5-phosphate contacts are provided by serine 148, glutamate 149, serine 173, and histidine 196. Position 149 (glutamate 149) interacts with Mn(2+). Residue glycine 202 participates in NADPH binding. The 1-deoxy-D-xylulose 5-phosphate site is built by serine 209, asparagine 214, lysine 215, and glutamate 218. Glutamate 218 serves as a coordination point for Mn(2+).

The protein belongs to the DXR family. The cofactor is Mg(2+). Mn(2+) is required as a cofactor.

The catalysed reaction is 2-C-methyl-D-erythritol 4-phosphate + NADP(+) = 1-deoxy-D-xylulose 5-phosphate + NADPH + H(+). Its pathway is isoprenoid biosynthesis; isopentenyl diphosphate biosynthesis via DXP pathway; isopentenyl diphosphate from 1-deoxy-D-xylulose 5-phosphate: step 1/6. Catalyzes the NADPH-dependent rearrangement and reduction of 1-deoxy-D-xylulose-5-phosphate (DXP) to 2-C-methyl-D-erythritol 4-phosphate (MEP). This Chlamydia trachomatis serovar L2 (strain ATCC VR-902B / DSM 19102 / 434/Bu) protein is 1-deoxy-D-xylulose 5-phosphate reductoisomerase.